A 393-amino-acid chain; its full sequence is Rubredoxin-NAD(+) reductase (393 aa).

Residues 9-12, 33-34, Lys42, Val80, Glu162, Asp282, Val294, and Lys325 each bind FAD; these read SGMA and CA.

Belongs to the FAD-dependent oxidoreductase family. As to quaternary structure, homodimer. FAD serves as cofactor.

It is found in the cytoplasm. It carries out the reaction 2 reduced [rubredoxin] + NAD(+) + H(+) = 2 oxidized [rubredoxin] + NADH. It functions in the pathway hydrocarbon metabolism; alkane degradation. Its function is as follows. Involved in the hydrocarbon hydroxylating system, which transfers electrons from NADH to rubredoxin reductase and then through rubredoxin to alkane 1 monooxygenase. The chain is Rubredoxin-NAD(+) reductase (rubB) from Acinetobacter baylyi (strain ATCC 33305 / BD413 / ADP1).